The primary structure comprises 150 residues: Cytosine deaminase (150 aa).

The CMP/dCMP-type deaminase domain maps to 3–121; that stretch reads FDDKKGLQVA…KLLIENGVEV (119 aa). N44 is a substrate binding site. H55 contacts Zn(2+). The active-site Proton donor is E57. Zn(2+)-binding residues include C84 and C87. D147 lines the substrate pocket.

This sequence belongs to the cytidine and deoxycytidylate deaminase family. Homodimer. Requires Zn(2+) as cofactor.

Its subcellular location is the cytoplasm. The protein resides in the nucleus. The enzyme catalyses cytosine + H2O + H(+) = uracil + NH4(+). The protein operates within pyrimidine metabolism; UMP biosynthesis via salvage pathway; uracil from cytosine: step 1/1. Its function is as follows. Catalyzes the hydrolytic deamination of cytosine to uracil or 5-methylcytosine to thymine. Is involved in the pyrimidine salvage pathway, which allows the cell to utilize cytosine for pyrimidine nucleotide synthesis. The polypeptide is Cytosine deaminase (Candida albicans (strain SC5314 / ATCC MYA-2876) (Yeast)).